Here is a 402-residue protein sequence, read N- to C-terminus: Mediator of RNA polymerase II transcription subunit 27 (402 aa).

Residues Met1–Ser23 show a composition bias toward polar residues. Residues Met1–Val30 form a disordered region. The stretch at Lys28–Leu49 forms a coiled coil.

Belongs to the Mediator complex subunit 27 family. As to quaternary structure, component of the Mediator complex.

The protein resides in the nucleus. Functionally, component of the Mediator complex, a coactivator involved in the regulated transcription of nearly all RNA polymerase II-dependent genes. Mediator functions as a bridge to convey information from gene-specific regulatory proteins to the basal RNA polymerase II transcription machinery. The Mediator complex, having a compact conformation in its free form, is recruited to promoters by direct interactions with regulatory proteins and serves for the assembly of a functional preinitiation complex with RNA polymerase II and the general transcription factors. In Arabidopsis thaliana (Mouse-ear cress), this protein is Mediator of RNA polymerase II transcription subunit 27 (MED27).